The chain runs to 549 residues: Cation/acetate symporter ActP (549 aa).

13 consecutive transmembrane segments (helical) span residues 32 to 54 (IQAI…WASK), 75 to 97 (GMAI…LVYT), 102 to 124 (GLIY…AERL), 145 to 167 (IRIL…QMVG), 182 to 204 (VAVV…LATT), 211 to 233 (AILL…NFNF), 263 to 285 (ALSL…MRFF), 298 to 320 (FYAT…GAIL), 361 to 383 (AVAF…SAVS), 404 to 423 (VSKI…GILF), 428 to 450 (IAFM…ILLS), 462 to 484 (LVGG…TIWV), and 494 to 516 (YPYE…LFSI).

The protein belongs to the sodium:solute symporter (SSF) (TC 2.A.21) family.

It is found in the cell inner membrane. In terms of biological role, transports acetate. This is Cation/acetate symporter ActP from Photorhabdus laumondii subsp. laumondii (strain DSM 15139 / CIP 105565 / TT01) (Photorhabdus luminescens subsp. laumondii).